We begin with the raw amino-acid sequence, 204 residues long: MLTEQQINQLDWEKVDHLMPAIVQHAVSGEVLMMGYMNQEALAVTEKTGKVTFFSRTKQRLWTKGESSGHFLNVVNIYPDCDNDTLLILVKPIGPTCHLGNSSCFAPAASDWSFLYQLEQLLASRKSADPASSYTAKLYASGTKRIAQKVGEEGVETALAATVNDREELTNEASDLMYHLLVLLQDQDLDFSTVIGRLRERHEK.

The segment at 1-114 (MLTEQQINQL…FAPAASDWSF (114 aa)) is phosphoribosyl-AMP cyclohydrolase. Residues 115–204 (LYQLEQLLAS…IGRLRERHEK (90 aa)) form a phosphoribosyl-ATP pyrophosphohydrolase region.

It in the N-terminal section; belongs to the PRA-CH family. The protein in the C-terminal section; belongs to the PRA-PH family.

It localises to the cytoplasm. It carries out the reaction 1-(5-phospho-beta-D-ribosyl)-ATP + H2O = 1-(5-phospho-beta-D-ribosyl)-5'-AMP + diphosphate + H(+). The catalysed reaction is 1-(5-phospho-beta-D-ribosyl)-5'-AMP + H2O = 1-(5-phospho-beta-D-ribosyl)-5-[(5-phospho-beta-D-ribosylamino)methylideneamino]imidazole-4-carboxamide. It participates in amino-acid biosynthesis; L-histidine biosynthesis; L-histidine from 5-phospho-alpha-D-ribose 1-diphosphate: step 2/9. It functions in the pathway amino-acid biosynthesis; L-histidine biosynthesis; L-histidine from 5-phospho-alpha-D-ribose 1-diphosphate: step 3/9. This chain is Histidine biosynthesis bifunctional protein HisIE (hisI), found in Yersinia pestis.